The chain runs to 426 residues: MSEMAASSAISLLDIKLRRFGVGASNHELRLTKWFKGDQAGAPTRRFTCFADMLAPIRRSEKSEERRFDQKMSAHGAGIKTSSSAVPFASPKSRFLSKQEKFYPRCTPRLTGPQSRDTPPKRDTGIANEKDWGIDLLNENVNEAGTNEDGSSWFRESGHDLGDNGYRCRWSRMGGRSHDGSSEWTETWWEKSDWTGYKELGVEKSGKNSEGDSWWETWQEVLHQDEWSNLARIERSAQKQAKSGTENAGWYEKWWEKYDAKGWTEKGAHKYGRLNEQSWWEKWGEHYDGRGSVLKWTDKWAETELGTKWGDKWEEKFFSGIGSRQGETWHVSPNSDRWSRTWGEEHFGNGKVHKYGKSTTGESWDIVVDEETYYEAEPHYGWADVVGDSTQLLSIQPRERPPGVYPNLEFGPSPPPEPDLPPDQPQ.

The transit peptide at 1-58 (MSEMAASSAISLLDIKLRRFGVGASNHELRLTKWFKGDQAGAPTRRFTCFADMLAPIR) directs the protein to the chloroplast. Disordered regions lie at residues 106 to 127 (CTPRLTGPQSRDTPPKRDTGIA) and 396 to 426 (QPRERPPGVYPNLEFGPSPPPEPDLPPDQPQ). Over residues 118–127 (TPPKRDTGIA) the composition is skewed to basic and acidic residues. Pro residues predominate over residues 412–426 (PSPPPEPDLPPDQPQ).

The protein belongs to the ESV1 family.

It is found in the plastid. The protein resides in the chloroplast stroma. Its subcellular location is the plastid stroma. Functionally, binds preferentially to highly ordered alpha-glucans, such as starch and crystalline maltodextrins. Involved in the organization of the starch granule matrix, thus influencing starch turnover by modulating the accessibility of starch polymers to modifying and degrading enzymes involved in phosphorylation, hydrolyzes and synthesis, including starch synthases (SSI and SSIII), starch phosphorylases (PHS1), isoamylase, beta-amylase, glucan water dikinase (GWD) and phosphoglucan water dikinase (PWD). Prevents GWD- and PWD-mediated starch phosphorylation, and subsequent degradation. Required for the control of starch degradation in leaves and starch distribution in nonphotosynthetic parts (e.g. cells immediately adjacent to veins, columella cells of root caps, stems, flowers and siliques) by limiting the hasty depletion of starch reserves during the night. Promotes gravitropic responses, negative in shoots but positive in roots, by maintaining starch granules (statoliths) accumulation in hypocotyls and roots columella, especially in dark conditions and in the endodermis, where starch is formed from transported glucose-6-phosphates. This chain is Protein EARLY STARVATION 1, chloroplastic, found in Arabidopsis thaliana (Mouse-ear cress).